We begin with the raw amino-acid sequence, 106 residues long: Large ribosomal subunit protein uL23 (106 aa).

This sequence belongs to the universal ribosomal protein uL23 family. Part of the 50S ribosomal subunit. Contacts protein L29, and trigger factor when it is bound to the ribosome.

Its function is as follows. One of the early assembly proteins it binds 23S rRNA. One of the proteins that surrounds the polypeptide exit tunnel on the outside of the ribosome. Forms the main docking site for trigger factor binding to the ribosome. The sequence is that of Large ribosomal subunit protein uL23 from Acinetobacter baumannii (strain AB307-0294).